A 150-amino-acid polypeptide reads, in one-letter code: SsrA-binding protein (150 aa).

The protein belongs to the SmpB family.

Its subcellular location is the cytoplasm. Functionally, required for rescue of stalled ribosomes mediated by trans-translation. Binds to transfer-messenger RNA (tmRNA), required for stable association of tmRNA with ribosomes. tmRNA and SmpB together mimic tRNA shape, replacing the anticodon stem-loop with SmpB. tmRNA is encoded by the ssrA gene; the 2 termini fold to resemble tRNA(Ala) and it encodes a 'tag peptide', a short internal open reading frame. During trans-translation Ala-aminoacylated tmRNA acts like a tRNA, entering the A-site of stalled ribosomes, displacing the stalled mRNA. The ribosome then switches to translate the ORF on the tmRNA; the nascent peptide is terminated with the 'tag peptide' encoded by the tmRNA and targeted for degradation. The ribosome is freed to recommence translation, which seems to be the essential function of trans-translation. This Borreliella afzelii (strain PKo) (Borrelia afzelii) protein is SsrA-binding protein.